The primary structure comprises 278 residues: Shikimate dehydrogenase (NADP(+)) (278 aa).

Residues 19 to 21 and threonine 66 contribute to the shikimate site; that span reads SLS. Catalysis depends on lysine 70, which acts as the Proton acceptor. Aspartate 82 provides a ligand contact to NADP(+). Shikimate-binding residues include asparagine 91 and aspartate 107. NADP(+) contacts are provided by residues 133–137, 157–162, and isoleucine 222; these read GSGGA and NRTRAR. Position 224 (tyrosine 224) interacts with shikimate. An NADP(+)-binding site is contributed by glycine 245.

This sequence belongs to the shikimate dehydrogenase family. In terms of assembly, homodimer.

The enzyme catalyses shikimate + NADP(+) = 3-dehydroshikimate + NADPH + H(+). The protein operates within metabolic intermediate biosynthesis; chorismate biosynthesis; chorismate from D-erythrose 4-phosphate and phosphoenolpyruvate: step 4/7. Functionally, involved in the biosynthesis of the chorismate, which leads to the biosynthesis of aromatic amino acids. Catalyzes the reversible NADPH linked reduction of 3-dehydroshikimate (DHSA) to yield shikimate (SA). This chain is Shikimate dehydrogenase (NADP(+)), found in Jannaschia sp. (strain CCS1).